Here is a 115-residue protein sequence, read N- to C-terminus: Immunoglobulin kappa chain variable 12-41 (115 aa).

The signal sequence occupies residues Met1–Cys20. The tract at residues Asp21 to Cys43 is framework-1. Cys43 and Cys108 are joined by a disulfide. A complementarity-determining-1 region spans residues Arg44–Ala54. The tract at residues Trp55 to Tyr69 is framework-2. The complementarity-determining-2 stretch occupies residues Asn70–Asp76. Residues Gly77 to Cys108 form a framework-3 region. The tract at residues Gln109–Pro115 is complementarity-determining-3.

The chain is Immunoglobulin kappa chain variable 12-41 from Mus musculus (Mouse).